The chain runs to 195 residues: Peptide methionine sulfoxide reductase MsrA 2 (195 aa).

Residue cysteine 18 is part of the active site.

This sequence belongs to the MsrA Met sulfoxide reductase family.

It catalyses the reaction L-methionyl-[protein] + [thioredoxin]-disulfide + H2O = L-methionyl-(S)-S-oxide-[protein] + [thioredoxin]-dithiol. The catalysed reaction is [thioredoxin]-disulfide + L-methionine + H2O = L-methionine (S)-S-oxide + [thioredoxin]-dithiol. Its function is as follows. Has an important function as a repair enzyme for proteins that have been inactivated by oxidation. Catalyzes the reversible oxidation-reduction of methionine sulfoxide in proteins to methionine. This Mesorhizobium japonicum (strain LMG 29417 / CECT 9101 / MAFF 303099) (Mesorhizobium loti (strain MAFF 303099)) protein is Peptide methionine sulfoxide reductase MsrA 2 (msrA2).